A 256-amino-acid chain; its full sequence is Thiazole synthase (256 aa).

The Schiff-base intermediate with DXP role is filled by Lys95. 1-deoxy-D-xylulose 5-phosphate-binding positions include Gly156, 182–183 (AG), and 204–205 (NT).

Belongs to the ThiG family. As to quaternary structure, homotetramer. Forms heterodimers with either ThiH or ThiS.

Its subcellular location is the cytoplasm. The catalysed reaction is [ThiS sulfur-carrier protein]-C-terminal-Gly-aminoethanethioate + 2-iminoacetate + 1-deoxy-D-xylulose 5-phosphate = [ThiS sulfur-carrier protein]-C-terminal Gly-Gly + 2-[(2R,5Z)-2-carboxy-4-methylthiazol-5(2H)-ylidene]ethyl phosphate + 2 H2O + H(+). Its pathway is cofactor biosynthesis; thiamine diphosphate biosynthesis. Catalyzes the rearrangement of 1-deoxy-D-xylulose 5-phosphate (DXP) to produce the thiazole phosphate moiety of thiamine. Sulfur is provided by the thiocarboxylate moiety of the carrier protein ThiS. In vitro, sulfur can be provided by H(2)S. The polypeptide is Thiazole synthase (Escherichia coli (strain K12 / MC4100 / BW2952)).